Reading from the N-terminus, the 259-residue chain is Isoprenyl transferase (259 aa).

The active site involves Asp30. Asp30 contacts Mg(2+). Substrate-binding positions include 31–34, Trp35, Arg43, His47, and 75–77; these read GNGR and STE. Asn78 acts as the Proton acceptor in catalysis. Residues Trp79, Arg81, Arg198, and 204 to 206 contribute to the substrate site; that span reads RIS. Glu217 contacts Mg(2+).

Belongs to the UPP synthase family. In terms of assembly, homodimer. Requires Mg(2+) as cofactor.

In terms of biological role, catalyzes the condensation of isopentenyl diphosphate (IPP) with allylic pyrophosphates generating different type of terpenoids. The sequence is that of Isoprenyl transferase from Caulobacter vibrioides (strain ATCC 19089 / CIP 103742 / CB 15) (Caulobacter crescentus).